The sequence spans 172 residues: Adenine phosphoribosyltransferase (172 aa).

It belongs to the purine/pyrimidine phosphoribosyltransferase family. Homodimer.

It is found in the cytoplasm. The catalysed reaction is AMP + diphosphate = 5-phospho-alpha-D-ribose 1-diphosphate + adenine. The protein operates within purine metabolism; AMP biosynthesis via salvage pathway; AMP from adenine: step 1/1. Functionally, catalyzes a salvage reaction resulting in the formation of AMP, that is energically less costly than de novo synthesis. The chain is Adenine phosphoribosyltransferase from Parasynechococcus marenigrum (strain WH8102).